A 249-amino-acid polypeptide reads, in one-letter code: Probable transcriptional regulatory protein Wbm0670 (249 aa).

The protein belongs to the TACO1 family.

The protein localises to the cytoplasm. This Wolbachia sp. subsp. Brugia malayi (strain TRS) protein is Probable transcriptional regulatory protein Wbm0670.